We begin with the raw amino-acid sequence, 653 residues long: Leishmanolysin homolog (653 aa).

The signal sequence occupies residues 1 to 44 (MHAPPTATRRSGPRRTHGIMARLVRLAAGVLVVTLVIGALTALS). The propeptide at 45-113 (ADDAKTHPHK…ALAGDSAPDV (69 aa)) is activation peptide. 2 disulfides stabilise this stretch: Cys-138-Cys-155 and Cys-203-Cys-242. His-276 is a binding site for Zn(2+). Glu-277 is an active-site residue. His-280 and His-346 together coordinate Zn(2+). 7 disulfides stabilise this stretch: Cys-326–Cys-398, Cys-405–Cys-468, Cys-418–Cys-437, Cys-427–Cys-502, Cys-479–Cys-524, Cys-529–Cys-579, and Cys-549–Cys-572. Residues Asn-383 and Asn-409 are each glycosylated (N-linked (GlcNAc...) asparagine). Asn-569 carries an N-linked (GlcNAc...) asparagine glycan. Residues 590–631 (ESMTNSGSGSSRPAPVEPSGSGSGSSAATTAPSPTRDGSAAA) are disordered. The segment covering 591 to 600 (SMTNSGSGSS) has biased composition (polar residues). Residues 607-631 (PSGSGSGSSAATTAPSPTRDGSAAA) show a composition bias toward low complexity. The GPI-anchor amidated serine moiety is linked to residue Ser-628. Positions 629 to 653 (AAADRIAPRTAAVALLALAVAAACV) are cleaved as a propeptide — removed in mature form.

It belongs to the peptidase M8 family. The cofactor is Zn(2+).

The protein resides in the cell membrane. The catalysed reaction is Preference for hydrophobic residues at P1 and P1' and basic residues at P2' and P3'. A model nonapeptide is cleaved at -Ala-Tyr-|-Leu-Lys-Lys-.. In terms of biological role, plays an integral role during the infection of macrophages in the mammalian host. The protein is Leishmanolysin homolog (gp63) of Crithidia fasciculata.